A 461-amino-acid polypeptide reads, in one-letter code: D-phenylhydantoinase (461 aa).

A divalent metal cation contacts are provided by His-59, His-61, and Lys-151. Lys-151 carries the N6-carboxylysine modification. Residue Tyr-156 coordinates substrate. The a divalent metal cation site is built by His-182 and His-239. Residue Ser-286 coordinates substrate. Asp-313 serves as a coordination point for a divalent metal cation. Asn-335 provides a ligand contact to substrate.

Belongs to the metallo-dependent hydrolases superfamily. Hydantoinase/dihydropyrimidinase family. Homotetramer. The cofactor is a divalent metal cation. Carboxylation allows a single lysine to coordinate two divalent metal cations.

The enzyme catalyses D-5-phenylhydantoin + H2O = N-carbamoyl-D-phenylglycine + H(+). Functionally, catalyzes the stereospecific hydrolysis of the cyclic amide bond of D-hydantoin derivatives with an aromatic side chains at the 5'-position. Has no activity on dihydropyrimidines. The physiological function is unknown. In Escherichia coli (strain UTI89 / UPEC), this protein is D-phenylhydantoinase.